The chain runs to 161 residues: Pathogenesis-related protein 1 (161 aa).

The first 26 residues, 1 to 26 (MNFTGYSRFLIVFVALVGALVLPSKA), serve as a signal peptide directing secretion. Residues 34–149 (LRVHNQARGA…NGGTIISCNY (116 aa)) enclose the SCP domain. Disulfide bonds link Cys-70–Cys-138, Cys-113–Cys-117, and Cys-133–Cys-147.

The protein belongs to the CRISP family.

Its subcellular location is the secreted. It localises to the extracellular space. The protein localises to the apoplast. In terms of biological role, partially responsible for acquired pathogen resistance. The protein is Pathogenesis-related protein 1 of Arabidopsis thaliana (Mouse-ear cress).